We begin with the raw amino-acid sequence, 320 residues long: L-lactate dehydrogenase A (320 aa).

3 residues coordinate substrate: arginine 88, asparagine 120, and arginine 151. Asparagine 120 is an NAD(+) binding site. The active-site Proton acceptor is the histidine 175.

Belongs to the LDH/MDH superfamily. LDH family. Homotetramer.

It localises to the cytoplasm. It catalyses the reaction (S)-lactate + NAD(+) = pyruvate + NADH + H(+). Its pathway is fermentation; pyruvate fermentation to lactate; (S)-lactate from pyruvate: step 1/1. Converts pyruvate to lactate. This Rhizopus oryzae (Mucormycosis agent) protein is L-lactate dehydrogenase A (LDHA).